The following is a 380-amino-acid chain: MTIPATYAAIITAAGRGTRAGDGPPKQWRPLAGQSVLERSIAAFAGFPRVVVTLAPEDMARGVAELSGPVVLVAGGATRSDSVRAALESLEGSGVTHVLIHDGARPLVSRRVIGGVIEALQSGAPAAAPALPVTDALWRAQDGCVTATASREGLFRAQTPQGFALDAILAAHRAHPEGAADDVELAIRAGLPVTVTPGDEDNLKLTWPGDFARAERILGDAMDIRLGNGFDVHAFTTGDHVWLCGVKIPHDKALLGHSDADVGMHALTDAIYGALAQGDIGRHFPPSDPQWKGAESHIFLRHAAMLARQMGYEISNADVTLICERPKVGPHAGAMALRLSEIIGVEPDRVSVKATTSERLGFTGREEGIASIATATLVKG.

A 2-C-methyl-D-erythritol 4-phosphate cytidylyltransferase region spans residues Met-1 to Ile-224. The interval Arg-225–Gly-380 is 2-C-methyl-D-erythritol 2,4-cyclodiphosphate synthase. A divalent metal cation is bound by residues Asp-231 and His-233. 4-CDP-2-C-methyl-D-erythritol 2-phosphate-binding positions include Asp-231–His-233 and His-257–Ser-258. His-265 is an a divalent metal cation binding site. Residues Asp-279–Gly-281, Thr-355–Glu-358, Phe-362, and Arg-365 contribute to the 4-CDP-2-C-methyl-D-erythritol 2-phosphate site.

This sequence in the N-terminal section; belongs to the IspD/TarI cytidylyltransferase family. IspD subfamily. It in the C-terminal section; belongs to the IspF family. The cofactor is a divalent metal cation.

The catalysed reaction is 2-C-methyl-D-erythritol 4-phosphate + CTP + H(+) = 4-CDP-2-C-methyl-D-erythritol + diphosphate. The enzyme catalyses 4-CDP-2-C-methyl-D-erythritol 2-phosphate = 2-C-methyl-D-erythritol 2,4-cyclic diphosphate + CMP. It functions in the pathway isoprenoid biosynthesis; isopentenyl diphosphate biosynthesis via DXP pathway; isopentenyl diphosphate from 1-deoxy-D-xylulose 5-phosphate: step 2/6. It participates in isoprenoid biosynthesis; isopentenyl diphosphate biosynthesis via DXP pathway; isopentenyl diphosphate from 1-deoxy-D-xylulose 5-phosphate: step 4/6. In terms of biological role, bifunctional enzyme that catalyzes the formation of 4-diphosphocytidyl-2-C-methyl-D-erythritol from CTP and 2-C-methyl-D-erythritol 4-phosphate (MEP) (IspD), and catalyzes the conversion of 4-diphosphocytidyl-2-C-methyl-D-erythritol 2-phosphate (CDP-ME2P) to 2-C-methyl-D-erythritol 2,4-cyclodiphosphate (ME-CPP) with a corresponding release of cytidine 5-monophosphate (CMP) (IspF). The protein is Bifunctional enzyme IspD/IspF of Paracoccus denitrificans (strain Pd 1222).